The chain runs to 147 residues: Hemoglobin subunit beta (147 aa).

The Globin domain maps to 3–147 (EWTDDERAII…VVSALGRQYH (145 aa)). Heme b-binding residues include histidine 64 and histidine 93.

Belongs to the globin family. In terms of assembly, heterotetramer of two alpha chains and two beta chains. Red blood cells.

Functionally, involved in oxygen transport from gills to the various peripheral tissues. The polypeptide is Hemoglobin subunit beta (hbb) (Merlangius merlangus (Whiting)).